The chain runs to 94 residues: DNA-directed RNA polymerase subunit omega (94 aa).

Belongs to the RNA polymerase subunit omega family. In terms of assembly, the RNAP catalytic core consists of 2 alpha, 1 beta, 1 beta' and 1 omega subunit. When a sigma factor is associated with the core the holoenzyme is formed, which can initiate transcription.

The enzyme catalyses RNA(n) + a ribonucleoside 5'-triphosphate = RNA(n+1) + diphosphate. Promotes RNA polymerase assembly. Latches the N- and C-terminal regions of the beta' subunit thereby facilitating its interaction with the beta and alpha subunits. This chain is DNA-directed RNA polymerase subunit omega, found in Photobacterium profundum (strain SS9).